The primary structure comprises 362 residues: Protein RecA (362 aa).

77 to 84 (GPESSGKT) contributes to the ATP binding site.

It belongs to the RecA family.

The protein localises to the cytoplasm. Its function is as follows. Can catalyze the hydrolysis of ATP in the presence of single-stranded DNA, the ATP-dependent uptake of single-stranded DNA by duplex DNA, and the ATP-dependent hybridization of homologous single-stranded DNAs. It interacts with LexA causing its activation and leading to its autocatalytic cleavage. The protein is Protein RecA of Allorhizobium ampelinum (strain ATCC BAA-846 / DSM 112012 / S4) (Agrobacterium vitis (strain S4)).